The sequence spans 876 residues: Alanine--tRNA ligase (876 aa).

Residues H564, H568, C666, and H670 each coordinate Zn(2+).

Belongs to the class-II aminoacyl-tRNA synthetase family. As to quaternary structure, homotetramer. Requires Zn(2+) as cofactor.

It is found in the cytoplasm. The enzyme catalyses tRNA(Ala) + L-alanine + ATP = L-alanyl-tRNA(Ala) + AMP + diphosphate. Functionally, catalyzes the attachment of alanine to tRNA(Ala) in a two-step reaction: alanine is first activated by ATP to form Ala-AMP and then transferred to the acceptor end of tRNA(Ala). Also edits incorrectly charged Ser-tRNA(Ala) and Gly-tRNA(Ala) via its editing domain. This is Alanine--tRNA ligase from Salmonella paratyphi A (strain ATCC 9150 / SARB42).